The primary structure comprises 296 residues: Ribose import binding protein RbsB (296 aa).

The N-terminal stretch at 1–25 (MNMKKLATLVSAVALSATVSANAMA) is a signal peptide.

This sequence belongs to the bacterial solute-binding protein 2 family. As to quaternary structure, the complex is composed of an ATP-binding protein (RbsA), two transmembrane proteins (RbsC) and a solute-binding protein (RbsB).

It is found in the periplasm. In terms of biological role, part of the ABC transporter complex RbsABC involved in ribose import. Binds ribose. Also serves as the primary chemoreceptor for chemotaxis. The polypeptide is Ribose import binding protein RbsB (Escherichia coli (strain K12)).